The primary structure comprises 385 residues: Succinate--CoA ligase [ADP-forming] subunit beta (385 aa).

Residues lysine 9–glutamate 244 form the ATP-grasp domain. Residues lysine 46, glycine 53 to glycine 55, glutamate 99, cysteine 102, and glutamate 107 contribute to the ATP site. Mg(2+) contacts are provided by asparagine 199 and aspartate 213. Residues asparagine 264 and glycine 321–methionine 323 each bind substrate.

Belongs to the succinate/malate CoA ligase beta subunit family. Heterotetramer of two alpha and two beta subunits. Mg(2+) is required as a cofactor.

It carries out the reaction succinate + ATP + CoA = succinyl-CoA + ADP + phosphate. The catalysed reaction is GTP + succinate + CoA = succinyl-CoA + GDP + phosphate. It functions in the pathway carbohydrate metabolism; tricarboxylic acid cycle; succinate from succinyl-CoA (ligase route): step 1/1. Functionally, succinyl-CoA synthetase functions in the citric acid cycle (TCA), coupling the hydrolysis of succinyl-CoA to the synthesis of either ATP or GTP and thus represents the only step of substrate-level phosphorylation in the TCA. The beta subunit provides nucleotide specificity of the enzyme and binds the substrate succinate, while the binding sites for coenzyme A and phosphate are found in the alpha subunit. This is Succinate--CoA ligase [ADP-forming] subunit beta from Bacillus velezensis (strain DSM 23117 / BGSC 10A6 / LMG 26770 / FZB42) (Bacillus amyloliquefaciens subsp. plantarum).